The primary structure comprises 188 residues: Potassium-transporting ATPase KdpC subunit (188 aa).

A helical transmembrane segment spans residues 13–33 (MTAIFWIGCGLAYPLIFTGFA).

The protein belongs to the KdpC family. The system is composed of three essential subunits: KdpA, KdpB and KdpC.

Its subcellular location is the cell inner membrane. Part of the high-affinity ATP-driven potassium transport (or Kdp) system, which catalyzes the hydrolysis of ATP coupled with the electrogenic transport of potassium into the cytoplasm. This subunit acts as a catalytic chaperone that increases the ATP-binding affinity of the ATP-hydrolyzing subunit KdpB by the formation of a transient KdpB/KdpC/ATP ternary complex. The sequence is that of Potassium-transporting ATPase KdpC subunit from Gloeobacter violaceus (strain ATCC 29082 / PCC 7421).